Reading from the N-terminus, the 290-residue chain is Acetyl-coenzyme A carboxylase carboxyl transferase subunit beta (290 aa).

One can recognise a CoA carboxyltransferase N-terminal domain in the interval 27 to 290; the sequence is LWVKCPSCEA…LQRQPADALA (264 aa). 4 residues coordinate Zn(2+): cysteine 31, cysteine 34, cysteine 50, and cysteine 53. The C4-type zinc finger occupies 31-53; that stretch reads CPSCEAVLYRNDVDANLHVCPKC.

Belongs to the AccD/PCCB family. As to quaternary structure, acetyl-CoA carboxylase is a heterohexamer composed of biotin carboxyl carrier protein (AccB), biotin carboxylase (AccC) and two subunits each of ACCase subunit alpha (AccA) and ACCase subunit beta (AccD). The cofactor is Zn(2+).

It localises to the cytoplasm. It carries out the reaction N(6)-carboxybiotinyl-L-lysyl-[protein] + acetyl-CoA = N(6)-biotinyl-L-lysyl-[protein] + malonyl-CoA. The protein operates within lipid metabolism; malonyl-CoA biosynthesis; malonyl-CoA from acetyl-CoA: step 1/1. Component of the acetyl coenzyme A carboxylase (ACC) complex. Biotin carboxylase (BC) catalyzes the carboxylation of biotin on its carrier protein (BCCP) and then the CO(2) group is transferred by the transcarboxylase to acetyl-CoA to form malonyl-CoA. The chain is Acetyl-coenzyme A carboxylase carboxyl transferase subunit beta from Burkholderia cenocepacia (strain ATCC BAA-245 / DSM 16553 / LMG 16656 / NCTC 13227 / J2315 / CF5610) (Burkholderia cepacia (strain J2315)).